We begin with the raw amino-acid sequence, 524 residues long: Origin of replication complex subunit 5 (524 aa).

Residues Met1–Pro19 show a composition bias toward low complexity. Residues Met1–Ser56 are disordered. The span at Ser20–Lys31 shows a compositional bias: pro residues. Over residues Arg39–Pro49 the composition is skewed to low complexity. Gly90 to Thr97 contacts ATP.

This sequence belongs to the ORC5 family. Component of the origin recognition complex (ORC) composed of at least ORC1, ORC2, ORC3, ORC4, ORC5 and ORC6. ORC is regulated in a cell-cycle and development dependent manner. It is sequentially assembled at the exit from anaphase of mitosis and disassembled as cells enter S phase.

The protein localises to the nucleus. Component of the origin recognition complex (ORC) that binds origins of replication. DNA-binding is ATP-dependent. The specific DNA sequences that define origins of replication have not been identified yet. ORC is required to assemble the pre-replication complex necessary to initiate DNA replication. The protein is Origin of replication complex subunit 5 of Oryza sativa subsp. indica (Rice).